The sequence spans 210 residues: Glutathione S-transferase P (210 aa).

A GST N-terminal domain is found at 2–81 (PPYTIVYFPV…HLGRSLGLYG (80 aa)). Tyrosine 4 carries the post-translational modification Phosphotyrosine; by EGFR. Glutathione is bound by residues tyrosine 8, arginine 14, tryptophan 39, lysine 45, and 52–53 (QL). Threonine 62 carries the post-translational modification Phosphothreonine. 65–66 (QS) is a binding site for glutathione. The region spanning 83–204 (DQKEAALVDM…SSPDHLNRPI (122 aa)) is the GST C-terminal domain. An N6-succinyllysine mark is found at lysine 103 and lysine 116. N6-acetyllysine is present on lysine 128.

This sequence belongs to the GST superfamily. Pi family. In terms of assembly, homodimer. Interacts with CDK5. In terms of tissue distribution, present in kidney, lung, testis and placenta, very low levels in liver.

It is found in the cytoplasm. The protein localises to the mitochondrion. The protein resides in the nucleus. It catalyses the reaction RX + glutathione = an S-substituted glutathione + a halide anion + H(+). The enzyme catalyses prostaglandin J2 + glutathione = prostaglandin J2-S-(R)-glutathione. The catalysed reaction is prostaglandin J2 + glutathione = prostaglandin J2-S-(S)-glutathione. It carries out the reaction prostaglandin A2 + glutathione = prostaglandin A2-S-(S)-glutathione. It catalyses the reaction 11(S)-hydroxy-14(S),15(S)-epoxy-(5Z,8Z,12E)-eicosatrienoate + glutathione = (11S,15S)-dihydroxy-14(R)-S-glutathionyl-(5Z,8Z,12E)-eicosatrienoate. Functionally, conjugation of reduced glutathione to a wide number of exogenous and endogenous hydrophobic electrophiles. Involved in the formation of glutathione conjugates of both prostaglandin A2 (PGA2) and prostaglandin J2 (PGJ2). Participates in the formation of novel hepoxilin regioisomers. Negatively regulates CDK5 activity via p25/p35 translocation to prevent neurodegeneration. The sequence is that of Glutathione S-transferase P from Rattus norvegicus (Rat).